Here is a 205-residue protein sequence, read N- to C-terminus: Methylamine utilization protein MauD (205 aa).

A helical transmembrane segment spans residues 5 to 25; the sequence is FLIASNVLLWLALIGCAVLML. The 135-residue stretch at 50 to 184 folds into the Thioredoxin domain; sequence PDVGDAAPTF…LESLLEADKS (135 aa).

The protein localises to the membrane. The protein operates within one-carbon metabolism; methylamine degradation. Its function is as follows. May be specifically involved in the processing, transport, and/or maturation of the MADH beta-subunit. The protein is Methylamine utilization protein MauD (mauD) of Methylorubrum extorquens (strain ATCC 14718 / DSM 1338 / JCM 2805 / NCIMB 9133 / AM1) (Methylobacterium extorquens).